The chain runs to 284 residues: UPF0276 protein Ping_0944 (284 aa).

The protein belongs to the UPF0276 family.

The polypeptide is UPF0276 protein Ping_0944 (Psychromonas ingrahamii (strain DSM 17664 / CCUG 51855 / 37)).